A 230-amino-acid chain; its full sequence is Heptaprenylglyceryl phosphate synthase (230 aa).

A sn-glycerol 1-phosphate-binding site is contributed by lysine 12. Residues aspartate 14 and serine 40 each contribute to the Mg(2+) site. Sn-glycerol 1-phosphate is bound by residues 159–164 (YLEYSG), glycine 189, and 209–210 (GN).

The protein belongs to the GGGP/HepGP synthase family. Group I subfamily. In terms of assembly, homodimer. The cofactor is Mg(2+).

The catalysed reaction is sn-glycerol 1-phosphate + all-trans-heptaprenyl diphosphate = 3-heptaprenyl-sn-glycero-1-phosphate + diphosphate. The protein operates within membrane lipid metabolism; glycerophospholipid metabolism. Its function is as follows. Prenyltransferase that catalyzes in vivo the transfer of the heptaprenyl moiety of heptaprenyl pyrophosphate (HepPP; 35 carbon atoms) to the C3 hydroxyl of sn-glycerol-1-phosphate (G1P), producing heptaprenylglyceryl phosphate (HepGP). This reaction is an ether-bond-formation step in the biosynthesis of archaea-type G1P-based membrane lipids found in Bacillales. The sequence is that of Heptaprenylglyceryl phosphate synthase from Bacillus pumilus (strain SAFR-032).